The chain runs to 185 residues: MIDTIMLDAQERMSKCVDATKNQMAKVRTGRAHPSLLDSIQVSCYGSMSPLKQVANVGVEDSRTLTVNVFDRSMVQAVEKAIMSSDLGLNPMSAGATLRIPLPSLTEERRKDFIKVVRNEAENGRIAIRNVRRDAISEVKKLEKAKACTEDDVRRSEDEVQKHTDSSIKNIDQILAAKEKELMEV.

Belongs to the RRF family.

It is found in the cytoplasm. Functionally, responsible for the release of ribosomes from messenger RNA at the termination of protein biosynthesis. May increase the efficiency of translation by recycling ribosomes from one round of translation to another. This Shewanella frigidimarina (strain NCIMB 400) protein is Ribosome-recycling factor.